The primary structure comprises 688 residues: Protein SDA1 homolog (688 aa).

Phosphoserine is present on residues Ser232, Ser234, and Ser236. Positions 254-318 form a coiled coil; it reads KKSSKNKKKL…ERFEVKMMLM (65 aa). Acidic residues predominate over residues 484–498; sequence VENEEENAEGDEDGW. The tract at residues 484-524 is disordered; the sequence is VENEEENAEGDEDGWESASLSDEADSDGEWVDVHHSSDEEQ. A compositionally biased stretch (basic and acidic residues) spans 514–524; it reads VDVHHSSDEEQ. Phosphoserine is present on residues Ser586 and Ser596. Residues 605-688 form a disordered region; sequence KKPKSDKETR…ALLKKRKRMK (84 aa). Positions 668 to 681 are enriched in basic and acidic residues; it reads SFREKQLALRDALL.

This sequence belongs to the SDA1 family.

Its subcellular location is the nucleus. The protein localises to the nucleolus. Required for 60S pre-ribosomal subunits export to the cytoplasm. The sequence is that of Protein SDA1 homolog (SDAD1) from Bos taurus (Bovine).